Reading from the N-terminus, the 237-residue chain is Derlin-2 (237 aa).

Residues 1–20 (MNGVVAALEEMPPVTRFYTG) are Cytoplasmic-facing. A helical transmembrane segment spans residues 21–41 (ACVLLTTAVHLEFVTPFHLYF). At 42-54 (NWELIIRKYQFWR) the chain is on the lumenal side. Residues 55 to 75 (LITSFCFFGSFGFSFLFNMIF) traverse the membrane as a helical segment. At 76 to 97 (TYRYCMMLEEGSFRGRRADFVY) the chain is on the cytoplasmic side. Residues 98–118 (MFLFGAVLMILSGIFVQILFL) form a helical membrane-spanning segment. At 119 to 166 (GQAFTIMLVYIWSRRNPMIQMNFFGVLTFTAPYLPWVLLLFSLLLGNN) the chain is on the lumenal side. The chain crosses the membrane as a helical span at residues 167–187 (AVVDFMGIACGHIYFFLEDVF). Topologically, residues 188–237 (PFQEHGKRFLKTPQWLVYLFDERRPEPLPEDERPGGFEWGDEQPEQEQHD) are cytoplasmic. A compositionally biased stretch (basic and acidic residues) spans 212-222 (PEPLPEDERPG). Positions 212–237 (PEPLPEDERPGGFEWGDEQPEQEQHD) are disordered. Over residues 226-237 (WGDEQPEQEQHD) the composition is skewed to acidic residues.

This sequence belongs to the derlin family.

The protein resides in the endoplasmic reticulum membrane. Functionally, may be required for the degradation process of some specific misfolded endoplasmic reticulum (ER) luminal proteins. Participates in the transfer of misfolded proteins from the ER to the cytosol, where they are destroyed by the proteasome in a ubiquitin-dependent manner. Its precise function remains unclear, but its ability to complement der1 mutations in C.cerevisiae, suggests a similar function in the degradation of ER misfolded proteins. The sequence is that of Derlin-2 from Caenorhabditis elegans.